Consider the following 685-residue polypeptide: DNA-directed RNA polymerase subunit beta' (685 aa).

Residues Cys69, Cys71, Cys87, and Cys90 each coordinate Zn(2+). Residues Asp489, Asp491, and Asp493 each contribute to the Mg(2+) site.

This sequence belongs to the RNA polymerase beta' chain family. RpoC1 subfamily. As to quaternary structure, in plastids the minimal PEP RNA polymerase catalytic core is composed of four subunits: alpha, beta, beta', and beta''. When a (nuclear-encoded) sigma factor is associated with the core the holoenzyme is formed, which can initiate transcription. It depends on Mg(2+) as a cofactor. Requires Zn(2+) as cofactor.

It localises to the plastid. The protein resides in the chloroplast. It catalyses the reaction RNA(n) + a ribonucleoside 5'-triphosphate = RNA(n+1) + diphosphate. DNA-dependent RNA polymerase catalyzes the transcription of DNA into RNA using the four ribonucleoside triphosphates as substrates. This Buxus microphylla (Littleleaf boxwood) protein is DNA-directed RNA polymerase subunit beta'.